A 63-amino-acid chain; its full sequence is U-reduvitoxin-Pr4a (63 aa).

A signal peptide spans 1 to 19 (MKIFGLFLLIATYMALAFA). 3 cysteine pairs are disulfide-bonded: Cys-24–Cys-40, Cys-31–Cys-45, and Cys-39–Cys-52.

The protein belongs to the venom Ptu1-like knottin family. As to expression, expressed by the venom gland.

It localises to the secreted. In terms of biological role, binds reversibly and blocks P/Q-type voltage-gated calcium channels (Cav). The polypeptide is U-reduvitoxin-Pr4a (Platymeris rhadamanthus (Red spot assassin bug)).